A 566-amino-acid polypeptide reads, in one-letter code: 2-isopropylmalate synthase (566 aa).

Positions P32–D306 constitute a Pyruvate carboxyltransferase domain. Mg(2+) is bound by residues D41, H245, H247, and N281. Positions P451–R566 are regulatory domain.

Belongs to the alpha-IPM synthase/homocitrate synthase family. LeuA type 2 subfamily. In terms of assembly, homodimer. Mg(2+) serves as cofactor.

It localises to the cytoplasm. The catalysed reaction is 3-methyl-2-oxobutanoate + acetyl-CoA + H2O = (2S)-2-isopropylmalate + CoA + H(+). The protein operates within amino-acid biosynthesis; L-leucine biosynthesis; L-leucine from 3-methyl-2-oxobutanoate: step 1/4. Functionally, catalyzes the condensation of the acetyl group of acetyl-CoA with 3-methyl-2-oxobutanoate (2-ketoisovalerate) to form 3-carboxy-3-hydroxy-4-methylpentanoate (2-isopropylmalate). This Mycobacterium ulcerans (strain Agy99) protein is 2-isopropylmalate synthase.